A 907-amino-acid chain; its full sequence is Protein translocase subunit SecA (907 aa).

Residues glutamine 87, 105–109 (GEGKT), and aspartate 512 contribute to the ATP site. Residues 834 to 907 (QEDVERMEEQ…KKYKQCHGKI (74 aa)) are disordered. 2 stretches are compositionally biased toward basic and acidic residues: residues 836–853 (DVERMEEQRRLQAEEAAR) and 873–888 (EEAHSPMVREERKVGR). Cysteine 892, cysteine 894, cysteine 903, and histidine 904 together coordinate Zn(2+). The span at 898–907 (KKYKQCHGKI) shows a compositional bias: basic residues.

The protein belongs to the SecA family. In terms of assembly, monomer and homodimer. Part of the essential Sec protein translocation apparatus which comprises SecA, SecYEG and auxiliary proteins SecDF-YajC and YidC. Zn(2+) serves as cofactor.

The protein resides in the cell inner membrane. It is found in the cytoplasm. It catalyses the reaction ATP + H2O + cellular proteinSide 1 = ADP + phosphate + cellular proteinSide 2.. Part of the Sec protein translocase complex. Interacts with the SecYEG preprotein conducting channel. Has a central role in coupling the hydrolysis of ATP to the transfer of proteins into and across the cell membrane, serving both as a receptor for the preprotein-SecB complex and as an ATP-driven molecular motor driving the stepwise translocation of polypeptide chains across the membrane. The protein is Protein translocase subunit SecA of Aliivibrio fischeri (strain ATCC 700601 / ES114) (Vibrio fischeri).